The sequence spans 115 residues: Replication initiation control protein YabA (115 aa).

Zn(2+) contacts are provided by H90, C92, C106, and C109.

The protein belongs to the YabA family. Homotetramer. Interacts with both DnaA and DnaN, acting as a bridge between these two proteins. Requires Zn(2+) as cofactor.

The protein localises to the cytoplasm. It localises to the nucleoid. In terms of biological role, involved in control of chromosome replication initiation. Inhibits the cooperative binding of DnaA to the oriC region, thus negatively regulating initiation of chromosome replication. Inhibits the ability of DnaA-ATP to form a helix on DNA; does not disassemble preformed DnaA-DNA helices. Decreases the residence time of DnaA on the chromosome at its binding sites (oriC, replication forks and promoter-binding sites). Tethers DnaA to the replication machinery via the DNA polymerase beta sliding clamp subunit (dnaN). Associates with oriC and other DnaA targets on the chromosome in a DnaA-dependent manner. The chain is Replication initiation control protein YabA from Staphylococcus aureus (strain JH1).